The sequence spans 408 residues: 5-hydroxytryptamine receptor 1A (408 aa).

Over 1–32 the chain is Extracellular; that stretch reads MDASNNTTSWNILQRGRMGPSWRRCPVSYQII. Asn-5 and Asn-6 each carry an N-linked (GlcNAc...) asparagine glycan. The chain crosses the membrane as a helical span at residues 33-53; the sequence is ASLFLGRSFSAGIFGNACVIA. The Cytoplasmic segment spans residues 54 to 67; sequence AIALERSLQNVANY. The chain crosses the membrane as a helical span at residues 68-92; that stretch reads LIGSLAVTDLMVSVLVLPMAAQNQV. Residues 93–101 lie on the Extracellular side of the membrane; sequence LNKWTLGQV. A helical transmembrane segment spans residues 102–126; it reads TCDIFISLDVLCCTSSILHLCAIAL. Residues Cys-103 and Cys-181 are joined by a disulfide bond. 2 residues coordinate serotonin: Asp-110 and Cys-114. A DRY motif; important for ligand-induced conformation changes motif is present at residues 127–129; sequence DRY. The Cytoplasmic portion of the chain corresponds to 127 to 146; sequence DRYWAITDPIDYVNKRTPRR. The helical transmembrane segment at 147 to 168 threads the bilayer; the sequence is AAVLISITWIVGFSISIPPMLG. Over 169–187 the chain is Extracellular; it reads WRTPEDRSDPNACRISEDP. The helical transmembrane segment at 188-210 threads the bilayer; the sequence is GYTIYSTFGAFYIPLILMLVLYG. Over 211–333 the chain is Cytoplasmic; it reads KIFKAARFRI…LARERKTVKT (123 aa). A disordered region spans residues 235–255; sequence TCLSVSQQSPKEKQRGAQQEL. Lys-332, Thr-333, and Gly-339 together coordinate 1D-myo-inositol 4-phosphate. Residues 334 to 357 traverse the membrane as a helical segment; that stretch reads LGIIMGTFILCWLPFFIVALVLPF. Residues 358-364 are Extracellular-facing; sequence CETCHMP. Residues 365-389 traverse the membrane as a helical segment; it reads HLLFDIITWLGYSNSLLNPIIYAYF. Residues 382 to 386 carry the NPxxY motif; important for ligand-induced conformation changes and signaling motif; sequence NPIIY. The 1D-myo-inositol 4-phosphate site is built by Phe-389, Asn-390, and Lys-391. Over 390-408 the chain is Cytoplasmic; sequence NKDFQSAFKKIIKCKFCRQ.

The protein belongs to the G-protein coupled receptor 1 family. 5-hydroxytryptamine receptor subfamily. HTR1A sub-subfamily. As to expression, first expressed in the rostral part of the brain stem at stage 22. At later stages of development, expression is localized to serotonergic neurons. The expression pattern changes in the tadpole of stage 41 where, in addition to serotonergic neurons, expression is also localized to the inner nuclear layer (INL) of the developing retina. This expression pattern continues through to the start of metamorphosis (stage 46). In adults, expressed in the brain, in particular the telencephalon, diencephalon and mesencephalon. In the telencephalic region, expression is localized to the lateral, dorsal and medial pallium, and in the striatum, septum and amygdala. In the mesencephalic region, expression is strongest in the optic tectum and torus semicircularis with moderate levels of expression in tegmental nuclei. In diencephalon, localized to the dorsal and ventral thalamus and the preoptic area of the hypothalamus.

It is found in the cell membrane. G-protein coupled receptor activity is regulated by lipids: phosphatidylinositol 4-phosphate increases HTR1A-mediated activity. G-protein coupled receptor for 5-hydroxytryptamine (serotonin). Also functions as a receptor for various drugs and psychoactive substances. Ligand binding causes a conformation change that triggers signaling via guanine nucleotide-binding proteins (G proteins) and modulates the activity of downstream effectors, such as adenylate cyclase. HTR1A is coupled to G(i)/G(o) G alpha proteins and mediates inhibitory neurotransmission: signaling inhibits adenylate cyclase activity and activates a phosphatidylinositol-calcium second messenger system that regulates the release of Ca(2+) ions from intracellular stores. Beta-arrestin family members regulate signaling by mediating both receptor desensitization and resensitization processes. Activation of the receptor may play a role in the exit from G0 phase and in promoting DNA synthesis. The chain is 5-hydroxytryptamine receptor 1A from Xenopus laevis (African clawed frog).